The following is a 662-amino-acid chain: MDPKERIKELREKINYHNYRYYVLDQPEISDYEYDMLMRELIELEEKYPELKTPDSPSQRVGGEPLKEFEPFTHVVPMLSLANAFSEGELRDFDRRVREAVGDVEYVVELKIDGLSVELIYEKGIFTVGSTRGDGIVGENVTQNLKTIKSIPLRLKDDVSLVVRGEVFMPRASFEKLNEEREKLGESLFANPRNAAAGSLRQLDPKVTAKRDLDIFIFNLQKIEGRKFKTHIETLEFLNEQGFKIIPIHKKCSNIDEVIKEIEEIRNLRDKLPYDIDGAVVKVNDLEKREILGQTAKDPRWAIAFKYPAERKKTKVLDIIVQVGRTGALTPTAILEPVAISGSVVSRATLHNEDYIKEKDIRIGDTVIVQKAGEIIPEVVEVVKEERTGQEREFVMPDRCPECGALAVRLLGEAIRRCTGLNCPAQLLRGIIHFASKDAMDIEGLGPAIINQLLSKGLIHNIADLYYLKYEDLIQLERMGDKSVKNLLNAIEESKTRDLDRLLFGLGINLIGSKAAQVIAEHFKTMDNIMKAKFEDFTQLPDIGPKMARSIVSFFAEKQNVEIIEKLKNAGVNMKKIPKEKVNNIFEGKTFVLTGALGNYTREEATRIIEERGGKVTNSVSKKTDYVLVGKDPGSKLKKAQELGIKIIDEKQFEEMLKGENI.

NAD(+)-binding positions include 31 to 35, 80 to 81, and glutamate 109; these read DYEYD and SL. Lysine 111 acts as the N6-AMP-lysine intermediate in catalysis. Arginine 132, glutamate 166, lysine 282, and lysine 306 together coordinate NAD(+). Residues cysteine 400, cysteine 403, cysteine 418, and cysteine 423 each contribute to the Zn(2+) site. The BRCT domain occupies 581–662; sequence KVNNIFEGKT…FEEMLKGENI (82 aa).

This sequence belongs to the NAD-dependent DNA ligase family. LigA subfamily. It depends on Mg(2+) as a cofactor. Mn(2+) serves as cofactor.

It catalyses the reaction NAD(+) + (deoxyribonucleotide)n-3'-hydroxyl + 5'-phospho-(deoxyribonucleotide)m = (deoxyribonucleotide)n+m + AMP + beta-nicotinamide D-nucleotide.. In terms of biological role, DNA ligase that catalyzes the formation of phosphodiester linkages between 5'-phosphoryl and 3'-hydroxyl groups in double-stranded DNA using NAD as a coenzyme and as the energy source for the reaction. It is essential for DNA replication and repair of damaged DNA. This is DNA ligase from Thermoanaerobacter pseudethanolicus (strain ATCC 33223 / 39E) (Clostridium thermohydrosulfuricum).